The primary structure comprises 359 residues: Nicotinate-nucleotide--dimethylbenzimidazole phosphoribosyltransferase (359 aa).

The Proton acceptor role is filled by Glu318.

This sequence belongs to the CobT family. In terms of assembly, homodimer.

The catalysed reaction is 5,6-dimethylbenzimidazole + nicotinate beta-D-ribonucleotide = alpha-ribazole 5'-phosphate + nicotinate + H(+). It functions in the pathway nucleoside biosynthesis; alpha-ribazole biosynthesis; alpha-ribazole from 5,6-dimethylbenzimidazole: step 1/2. Functionally, catalyzes the synthesis of alpha-ribazole-5'-phosphate from nicotinate mononucleotide (NAMN) and 5,6-dimethylbenzimidazole (DMB). The polypeptide is Nicotinate-nucleotide--dimethylbenzimidazole phosphoribosyltransferase (Shigella flexneri serotype 5b (strain 8401)).